The following is a 20-amino-acid chain: Cytochrome P450 3A5 (20 aa).

This sequence belongs to the cytochrome P450 family. The cofactor is heme.

The protein resides in the endoplasmic reticulum membrane. Its subcellular location is the microsome membrane. It carries out the reaction an organic molecule + reduced [NADPH--hemoprotein reductase] + O2 = an alcohol + oxidized [NADPH--hemoprotein reductase] + H2O + H(+). 6-beta-testosterone hydroxylase. This Papio sp. (Baboon) protein is Cytochrome P450 3A5.